The sequence spans 86 residues: Hepcidin-1 (86 aa).

An N-terminal signal peptide occupies residues 1-22; that stretch reads MKAFSVAVVLVIACMFILESTA. Positions 23–59 are excised as a propeptide; sequence VPFSEVRTEEVGSFDSPVGEHQQPGGESMHLPEPFRF. Intrachain disulfides connect Cys-68/Cys-84, Cys-71/Cys-74, Cys-72/Cys-80, and Cys-75/Cys-83.

The protein belongs to the hepcidin family.

Its subcellular location is the secreted. Functionally, seems to act as a signaling molecule involved in the maintenance of iron homeostasis. Seems to be required in conjunction with HFE to regulate both intestinal iron absorption and iron storage in macrophages. May also have antimicrobial activity. The chain is Hepcidin-1 (hamp1) from Salmo salar (Atlantic salmon).